A 219-amino-acid chain; its full sequence is RING finger protein nenya (219 aa).

The RING-type zinc finger occupies 6 to 48 (CNKCFRRRNVEPTLIFHMTQCQHVLCASCLSESSTDKKCPLCK). The disordered stretch occupies residues 161–181 (NQARGLRPRTPSVTTSDNTQS).

In terms of assembly, may interact with itself, with narya and vilya through its RING-type zinc finger.

In terms of biological role, required for the formation of DNA double-strand breaks together with narya and vilya during the meiotic recombination process. Plays a redundant role with narya in chromosome segregation during female meiosis. The protein is RING finger protein nenya of Drosophila melanogaster (Fruit fly).